The primary structure comprises 172 residues: Large ribosomal subunit protein uL10 (172 aa).

It belongs to the universal ribosomal protein uL10 family. As to quaternary structure, part of the ribosomal stalk of the 50S ribosomal subunit. The N-terminus interacts with L11 and the large rRNA to form the base of the stalk. The C-terminus forms an elongated spine to which L12 dimers bind in a sequential fashion forming a multimeric L10(L12)X complex.

Its function is as follows. Forms part of the ribosomal stalk, playing a central role in the interaction of the ribosome with GTP-bound translation factors. The chain is Large ribosomal subunit protein uL10 from Bartonella henselae (strain ATCC 49882 / DSM 28221 / CCUG 30454 / Houston 1) (Rochalimaea henselae).